The following is a 598-amino-acid chain: Pentatricopeptide repeat-containing protein At1g09900 (598 aa).

14 PPR repeats span residues 101-135 (EDVE…GNVP), 136-170 (DIIP…GAVP), 171-201 (DVIT…MSVS), 203-237 (DVVT…DCYP), 238-272 (DVIT…GCTP), 273-307 (DVVT…GCQP), 308-342 (NVIT…GFSP), 343-377 (SVVT…GCQP), 378-412 (NSLS…GCYP), 413-447 (DIVT…GCSP), 448-482 (VLIT…DLKP), 483-517 (DTIT…GIRP), 518-552 (NAVT…GCKP), and 553-587 (NETS…GLMK).

Belongs to the PPR family. P subfamily.

The protein is Pentatricopeptide repeat-containing protein At1g09900 of Arabidopsis thaliana (Mouse-ear cress).